A 1086-amino-acid chain; its full sequence is Auxin response factor 19 (1086 aa).

The TF-B3 DNA-binding region spans 126–228 (FCKTLTASDT…QLMLGIRRAN (103 aa)). Residues 454 to 485 (PSKLLNFQSPNLSSANSQFNKPNTVNHISQQM) show a composition bias toward polar residues. Disordered regions lie at residues 454–504 (PSKL…QQQQ), 545–564 (QSPN…QSML), 624–647 (LSQN…QQLQ), and 659–788 (QQQS…SVFE). A compositionally biased stretch (low complexity) spans 486-504 (QAQPAMVKSQQQQQQQQQQ). Residues 659–697 (QQQSIPPVSSSLQPQLSALQQTQSHQLQQLLSSQNQQPL) show a composition bias toward low complexity. Over residues 700–710 (GNNSFPASTFM) the composition is skewed to polar residues. Positions 711-724 (QPPQIQVSPQQQGQ) are enriched in low complexity. Polar residues predominate over residues 747–771 (SCSTSPSANNTGHDNVSPTNFLSRN). Residues 772–785 (QQQGQAASVSASDS) show a composition bias toward low complexity. The PB1 domain occupies 958 to 1051 (RTYTKVQKRG…EVQQMSLDGD (94 aa)).

This sequence belongs to the ARF family. Homodimers and heterodimers. Interacts with the auxin-responsive protein IAA1. Binds to JMJ30. Binds to ATXR2 in the nucleus.

Its subcellular location is the nucleus. In terms of biological role, auxin response factors (ARFs) are transcriptional factors that bind specifically to the DNA sequence 5'-TGTCTC-3' found in the auxin-responsive promoter elements (AuxREs). Could act as transcriptional activator or repressor. Formation of heterodimers with Aux/IAA proteins may alter their ability to modulate early auxin response genes expression. Involved in ethylene responses. Regulates lateral root formation through direct regulation of LBD16 and/or LBD29. Functionally redundant with ARF7. Involved in cellular dedifferentiation during callus formation on callus-inducing medium (CIM) and in an ATXR2-dependent manner. The sequence is that of Auxin response factor 19 from Arabidopsis thaliana (Mouse-ear cress).